The following is a 96-amino-acid chain: Co-chaperonin GroES (96 aa).

Belongs to the GroES chaperonin family. As to quaternary structure, heptamer of 7 subunits arranged in a ring. Interacts with the chaperonin GroEL.

Its subcellular location is the cytoplasm. Its function is as follows. Together with the chaperonin GroEL, plays an essential role in assisting protein folding. The GroEL-GroES system forms a nano-cage that allows encapsulation of the non-native substrate proteins and provides a physical environment optimized to promote and accelerate protein folding. GroES binds to the apical surface of the GroEL ring, thereby capping the opening of the GroEL channel. The protein is Co-chaperonin GroES of Geotalea uraniireducens (strain Rf4) (Geobacter uraniireducens).